Reading from the N-terminus, the 232-residue chain is 5'-methylthioadenosine/S-adenosylhomocysteine nucleosidase (232 aa).

Glu12 functions as the Proton acceptor in the catalytic mechanism. Substrate is bound by residues Gly78, Ile152, and 173–174 (ME). Catalysis depends on Asp197, which acts as the Proton donor.

The protein belongs to the PNP/UDP phosphorylase family. MtnN subfamily. As to quaternary structure, homodimer.

The enzyme catalyses S-adenosyl-L-homocysteine + H2O = S-(5-deoxy-D-ribos-5-yl)-L-homocysteine + adenine. It catalyses the reaction S-methyl-5'-thioadenosine + H2O = 5-(methylsulfanyl)-D-ribose + adenine. It carries out the reaction 5'-deoxyadenosine + H2O = 5-deoxy-D-ribose + adenine. The protein operates within amino-acid biosynthesis; L-methionine biosynthesis via salvage pathway; S-methyl-5-thio-alpha-D-ribose 1-phosphate from S-methyl-5'-thioadenosine (hydrolase route): step 1/2. Its function is as follows. Catalyzes the irreversible cleavage of the glycosidic bond in both 5'-methylthioadenosine (MTA) and S-adenosylhomocysteine (SAH/AdoHcy) to adenine and the corresponding thioribose, 5'-methylthioribose and S-ribosylhomocysteine, respectively. Also cleaves 5'-deoxyadenosine, a toxic by-product of radical S-adenosylmethionine (SAM) enzymes, into 5-deoxyribose and adenine. Thus, is required for in vivo function of the radical SAM enzymes biotin synthase and lipoic acid synthase, that are inhibited by 5'-deoxyadenosine accumulation. The chain is 5'-methylthioadenosine/S-adenosylhomocysteine nucleosidase from Klebsiella pneumoniae subsp. pneumoniae (strain ATCC 700721 / MGH 78578).